Consider the following 261-residue polypeptide: Probable septum site-determining protein MinC (261 aa).

It belongs to the MinC family. In terms of assembly, interacts with MinD and FtsZ.

Functionally, cell division inhibitor that blocks the formation of polar Z ring septums. Rapidly oscillates between the poles of the cell to destabilize FtsZ filaments that have formed before they mature into polar Z rings. Prevents FtsZ polymerization. This Burkholderia cenocepacia (strain ATCC BAA-245 / DSM 16553 / LMG 16656 / NCTC 13227 / J2315 / CF5610) (Burkholderia cepacia (strain J2315)) protein is Probable septum site-determining protein MinC.